We begin with the raw amino-acid sequence, 342 residues long: CD2 antigen cytoplasmic tail-binding protein 2 (342 aa).

A disordered region spans residues 1-64 (MPKRKVTFQG…DEEGSSKYDI (64 aa)). A Glycyl lysine isopeptide (Lys-Gly) (interchain with G-Cter in SUMO2) cross-link involves residue Lys-26. Lys-44 is subject to N6-acetyllysine. 3 positions are modified to phosphoserine: Ser-46, Ser-49, and Ser-117. 2 disordered regions span residues 130–150 (RPPD…GQTP) and 177–200 (LGAR…PQRL). A Phosphoserine modification is found at Ser-196. In terms of domain architecture, GYF spans 281 to 339 (DVMWEYKWENTGDAELYGPFTSAQMQTWVSEGYFPDGVYCRKLDPPGGQFYNSKRIDFE).

Component of the U5 snRNP complex composed of the U5 snRNA and at least PRPF6, PRPF8, SNRNP200, EFTUD2, SNRNP40, DDX23, TXNL4A and CD2BP2. Interacts directly with TXNL4A and PRPF6. Interacts (via GYF domain) with CD2 (via Pro-rich sequence in the cytoplasmic domain). Interacts with PQBP1.

It localises to the cytoplasm. The protein localises to the nucleus. Involved in pre-mRNA splicing as component of the U5 snRNP complex that is involved in spliceosome assembly. This chain is CD2 antigen cytoplasmic tail-binding protein 2 (Cd2bp2), found in Mus musculus (Mouse).